The primary structure comprises 892 residues: DNA ligase (892 aa).

Residues 1–23 form a disordered region; it reads MTMTNRDDSEQLAWDFDAPESDG. NAD(+) contacts are provided by residues 99–103, 148–149, and Glu182; these read DAAYD and SL. The N6-AMP-lysine intermediate role is filled by Lys184. NAD(+)-binding residues include Arg205, Glu244, Lys369, and Lys393. Zn(2+) contacts are provided by Cys490, Cys493, Cys509, and Cys515. The region spanning 810 to 892 is the BRCT domain; the sequence is GLPQTLAGKT…KQLLDTGTVE (83 aa).

It belongs to the NAD-dependent DNA ligase family. LigA subfamily. Mg(2+) is required as a cofactor. It depends on Mn(2+) as a cofactor.

The catalysed reaction is NAD(+) + (deoxyribonucleotide)n-3'-hydroxyl + 5'-phospho-(deoxyribonucleotide)m = (deoxyribonucleotide)n+m + AMP + beta-nicotinamide D-nucleotide.. In terms of biological role, DNA ligase that catalyzes the formation of phosphodiester linkages between 5'-phosphoryl and 3'-hydroxyl groups in double-stranded DNA using NAD as a coenzyme and as the energy source for the reaction. It is essential for DNA replication and repair of damaged DNA. The sequence is that of DNA ligase from Bifidobacterium adolescentis (strain ATCC 15703 / DSM 20083 / NCTC 11814 / E194a).